Consider the following 105-residue polypeptide: Nitrogen fixation nifHD region GlnB-like protein 1 (105 aa).

It belongs to the P(II) protein family.

Its function is as follows. Could be involved in the regulation of nitrogen fixation. The polypeptide is Nitrogen fixation nifHD region GlnB-like protein 1 (glnBA) (Methanothermobacter marburgensis (strain ATCC BAA-927 / DSM 2133 / JCM 14651 / NBRC 100331 / OCM 82 / Marburg) (Methanobacterium thermoautotrophicum)).